Here is a 138-residue protein sequence, read N- to C-terminus: Putative pre-16S rRNA nuclease (138 aa).

Belongs to the YqgF nuclease family.

The protein resides in the cytoplasm. Its function is as follows. Could be a nuclease involved in processing of the 5'-end of pre-16S rRNA. The protein is Putative pre-16S rRNA nuclease of Geobacillus sp. (strain WCH70).